The primary structure comprises 505 residues: ATP synthase subunit alpha (505 aa).

An ATP-binding site is contributed by 170 to 177 (GDRQTGKT).

Belongs to the ATPase alpha/beta chains family. In terms of assembly, F-type ATPases have 2 components, CF(1) - the catalytic core - and CF(0) - the membrane proton channel. CF(1) has five subunits: alpha(3), beta(3), gamma(1), delta(1), epsilon(1). CF(0) has four main subunits: a(1), b(1), b'(1) and c(9-12).

It is found in the cellular thylakoid membrane. The catalysed reaction is ATP + H2O + 4 H(+)(in) = ADP + phosphate + 5 H(+)(out). Produces ATP from ADP in the presence of a proton gradient across the membrane. The alpha chain is a regulatory subunit. This Prochlorococcus marinus (strain MIT 9515) protein is ATP synthase subunit alpha.